The sequence spans 173 residues: Bifunctional protein PyrR (173 aa).

The short motif at 93–105 is the PRPP-binding element; sequence VILIDDVLYTGRT.

The protein belongs to the purine/pyrimidine phosphoribosyltransferase family. PyrR subfamily. As to quaternary structure, homodimer and homohexamer; in equilibrium.

The enzyme catalyses UMP + diphosphate = 5-phospho-alpha-D-ribose 1-diphosphate + uracil. Its function is as follows. Regulates transcriptional attenuation of the pyrimidine nucleotide (pyr) operon by binding in a uridine-dependent manner to specific sites on pyr mRNA. This disrupts an antiterminator hairpin in the RNA and favors formation of a downstream transcription terminator, leading to a reduced expression of downstream genes. Also displays a weak uracil phosphoribosyltransferase activity which is not physiologically significant. The chain is Bifunctional protein PyrR from Streptococcus pyogenes serotype M12 (strain MGAS2096).